Consider the following 179-residue polypeptide: ATP synthase subunit delta (179 aa).

This sequence belongs to the ATPase delta chain family. As to quaternary structure, F-type ATPases have 2 components, F(1) - the catalytic core - and F(0) - the membrane proton channel. F(1) has five subunits: alpha(3), beta(3), gamma(1), delta(1), epsilon(1). F(0) has three main subunits: a(1), b(2) and c(10-14). The alpha and beta chains form an alternating ring which encloses part of the gamma chain. F(1) is attached to F(0) by a central stalk formed by the gamma and epsilon chains, while a peripheral stalk is formed by the delta and b chains.

It localises to the cell inner membrane. In terms of biological role, f(1)F(0) ATP synthase produces ATP from ADP in the presence of a proton or sodium gradient. F-type ATPases consist of two structural domains, F(1) containing the extramembraneous catalytic core and F(0) containing the membrane proton channel, linked together by a central stalk and a peripheral stalk. During catalysis, ATP synthesis in the catalytic domain of F(1) is coupled via a rotary mechanism of the central stalk subunits to proton translocation. Functionally, this protein is part of the stalk that links CF(0) to CF(1). It either transmits conformational changes from CF(0) to CF(1) or is implicated in proton conduction. This Anaeromyxobacter sp. (strain K) protein is ATP synthase subunit delta.